We begin with the raw amino-acid sequence, 429 residues long: Endo-beta-1,4-galactanase (429 aa).

A signal peptide spans 1-21 (MKSKVKMFFAAAIVWSACSST). Residue 146–149 (DPAK) participates in substrate binding. Glu-194 (proton donor) is an active-site residue. Substrate contacts are provided by residues 233 to 234 (TN) and His-267. The Nucleophile role is filled by Glu-292. Thr-296 lines the substrate pocket. Ca(2+)-binding residues include Asp-301, Asp-303, His-305, and Asn-307. Residues Lys-311 and Asp-388 each contribute to the substrate site. Ca(2+) contacts are provided by Ser-396 and Asp-399.

This sequence belongs to the glycosyl hydrolase 53 family. The cofactor is Ca(2+).

The protein localises to the secreted. It carries out the reaction The enzyme specifically hydrolyzes (1-&gt;4)-beta-D-galactosidic linkages in type I arabinogalactans.. Its function is as follows. Involved in galactan degradation. Degrades arabinose-free galactan to galactooligosaccharides, producing galactotetraose as the main product along with galactotriose, galactobiose, and galactose. Is also able to degrade galactotetraose, galactotriose and galactobiose, suggesting an additional exo-mode of activity. May hydrolyze the beta-1,4-galactan linkages of the galactan portion of arabinogalactan type I, a pectic plant polysaccharide from which most of the arabinose has been removed. This Bacillus subtilis (strain 168) protein is Endo-beta-1,4-galactanase.